Here is a 199-residue protein sequence, read N- to C-terminus: Protein GrpE (199 aa).

Basic and acidic residues predominate over residues 1 to 10 (MTNQTEKEQV). Positions 1–44 (MTNQTEKEQVEQDVSQATELAQEAQEAQTQDVEPELQQNNEIDP) are disordered. Low complexity predominate over residues 16 to 30 (QATELAQEAQEAQTQ).

Belongs to the GrpE family. In terms of assembly, homodimer.

The protein localises to the cytoplasm. Participates actively in the response to hyperosmotic and heat shock by preventing the aggregation of stress-denatured proteins, in association with DnaK and GrpE. It is the nucleotide exchange factor for DnaK and may function as a thermosensor. Unfolded proteins bind initially to DnaJ; upon interaction with the DnaJ-bound protein, DnaK hydrolyzes its bound ATP, resulting in the formation of a stable complex. GrpE releases ADP from DnaK; ATP binding to DnaK triggers the release of the substrate protein, thus completing the reaction cycle. Several rounds of ATP-dependent interactions between DnaJ, DnaK and GrpE are required for fully efficient folding. This is Protein GrpE from Glaesserella parasuis serovar 5 (strain SH0165) (Haemophilus parasuis).